Consider the following 688-residue polypeptide: MAADLVLEIGTEEIPARFLPPALAELAEKGRALLAEYRLAYADLAAYGTPRRLTLYVRDLAGDQAPLVQEIKGPPKKAAFDIDGVPTKAALGFARSQGVAVEDLVTRAVGPVEYVYAVRQETGRPAAEILAELGPRLIGALVFPRPMRWGDQDFRFVRPIRWILCVHGDRVIEFTVAGVRSGPHTWGHRFLSAGRLLVTTAGDYFTLLEENFVIVDPARRREMVWEQVRAAAAAESGTVADDPELLAEVADLLEYPSAFCGCFPESYLELPEPVLVTPMREHQRYFPVRDGTGRLMPFFVGVHNGTAEHLNLIRSGNEKVLRARLADAAFFFREDLEVPLPDRGPELKKVVFQESLGTMHEKVERLTALAGYLSSALGLDETERAQAHRAAVLSKNDLLTSMVYEFPELQGIMGREYALRAGEAPAVAEAIREQYLPAPGGEELPATRAGLVLALADRADNLVGAFGMGVQPTGSQDPYALRRQALGICHLLLDTPAYLDLDDFFREAYAAYGGRLTVEAGEVAAQLADFFGQRLRVLFQDRGLSYGVVEAALAAGHADVRDAWERATAVATFQSHPAFADISTAFTRANNLAKNAAGTRVEPALFKDPVEHTLYQAFLQVREQVEAQIARRRYGAALAALAELREPVDRFFDGVMVMVEEAAVRENRLALLRLVADLFKGIADLSKF.

Belongs to the class-II aminoacyl-tRNA synthetase family. In terms of assembly, tetramer of two alpha and two beta subunits.

It is found in the cytoplasm. It carries out the reaction tRNA(Gly) + glycine + ATP = glycyl-tRNA(Gly) + AMP + diphosphate. The polypeptide is Glycine--tRNA ligase beta subunit (Desulforudis audaxviator (strain MP104C)).